The chain runs to 110 residues: NADH-quinone oxidoreductase subunit K (110 aa).

The next 3 helical transmembrane spans lie at 13-33, 41-61, and 73-93; these read LNHYLILSSLVFTIGMFGLFM, ILMSIELMLLAVNINFVAFSI, and IIILTVAAAETSIGLAILLIY.

It belongs to the complex I subunit 4L family. NDH-1 is composed of 14 different subunits. Subunits NuoA, H, J, K, L, M, N constitute the membrane sector of the complex.

It is found in the cell inner membrane. The enzyme catalyses a quinone + NADH + 5 H(+)(in) = a quinol + NAD(+) + 4 H(+)(out). NDH-1 shuttles electrons from NADH, via FMN and iron-sulfur (Fe-S) centers, to quinones in the respiratory chain. The immediate electron acceptor for the enzyme in this species is believed to be ubiquinone. Couples the redox reaction to proton translocation (for every two electrons transferred, four hydrogen ions are translocated across the cytoplasmic membrane), and thus conserves the redox energy in a proton gradient. The protein is NADH-quinone oxidoreductase subunit K of Rickettsia conorii (strain ATCC VR-613 / Malish 7).